A 141-amino-acid chain; its full sequence is N,N-dimethylformamidase alpha subunit (141 aa).

In terms of assembly, heterotetramer of two DmfA1 (alpha) and two DmfA2 (beta) subunits.

It catalyses the reaction N,N-dimethylformamide + H2O = dimethylamine + formate. Functionally, hydrolyzes N,N-dimethylformamide, and to a lesser extent N,N-dimethylacetamide and N,N-diethylacetamide. Has no activity against the substituted amides N-methylformamide, N-ethylformamide, N-ethylformamide and N-methylacetamide or the unsubstituted amides formamide, nicotinamide, acetoamide, benzamide, acetamide and acrylamide. The polypeptide is N,N-dimethylformamidase alpha subunit (Paracoccus aminophilus).